Consider the following 621-residue polypeptide: uncharacterized protein (621 aa).

This sequence belongs to the chlamydial CPn_0512/CT_425/TC_0708 family.

This is an uncharacterized protein from Chlamydia muridarum (strain MoPn / Nigg).